Here is a 372-residue protein sequence, read N- to C-terminus: 4-hydroxy-3-methylbut-2-en-1-yl diphosphate synthase (flavodoxin) (372 aa).

Residues Cys270, Cys273, Cys305, and Glu312 each contribute to the [4Fe-4S] cluster site.

The protein belongs to the IspG family. [4Fe-4S] cluster is required as a cofactor.

The enzyme catalyses (2E)-4-hydroxy-3-methylbut-2-enyl diphosphate + oxidized [flavodoxin] + H2O + 2 H(+) = 2-C-methyl-D-erythritol 2,4-cyclic diphosphate + reduced [flavodoxin]. Its pathway is isoprenoid biosynthesis; isopentenyl diphosphate biosynthesis via DXP pathway; isopentenyl diphosphate from 1-deoxy-D-xylulose 5-phosphate: step 5/6. Functionally, converts 2C-methyl-D-erythritol 2,4-cyclodiphosphate (ME-2,4cPP) into 1-hydroxy-2-methyl-2-(E)-butenyl 4-diphosphate. The sequence is that of 4-hydroxy-3-methylbut-2-en-1-yl diphosphate synthase (flavodoxin) from Escherichia coli O9:H4 (strain HS).